The sequence spans 80 residues: Teretoxin Tsu6.5 (80 aa).

Residues 1–21 form the signal peptide; the sequence is MAINGRLLCLCLVLGLVFESL. Positions 22 to 42 are excised as a propeptide; it reads GHPSVQEKRAAEDSKPSGERR.

This sequence belongs to the teretoxin M (TM) superfamily. Post-translationally, contains 3 disulfide bonds. As to expression, expressed by the venom duct.

The protein localises to the secreted. The sequence is that of Teretoxin Tsu6.5 from Terebra subulata (Chocolate spotted auger).